Reading from the N-terminus, the 228-residue chain is Protein slowmo homolog (228 aa).

One can recognise a PRELI/MSF1 domain in the interval 1-172 (MPLFETIKHT…TIIKVQKEAE (172 aa)).

The protein belongs to the slowmo family.

This is Protein slowmo homolog (slmo) from Dictyostelium discoideum (Social amoeba).